A 579-amino-acid polypeptide reads, in one-letter code: Plastidial pyruvate kinase 2 (579 aa).

Residues 1–63 (MAQVVATRSI…SRRVVDTTVR (63 aa)) constitute a chloroplast transit peptide. Positions 6-24 (ATRSIQGSMLSPNGGSVST) are enriched in polar residues. Positions 6 to 26 (ATRSIQGSMLSPNGGSVSTRS) are disordered. A substrate-binding site is contributed by R140. K(+) contacts are provided by N142, S144, D175, and T176. ATP is bound at residue 142-145 (NMSH). R182 serves as a coordination point for ATP. K325 is a substrate binding site. A Mg(2+)-binding site is contributed by E327. 3 residues coordinate substrate: G350, D351, and T383. Residue D351 participates in Mg(2+) binding.

The protein belongs to the pyruvate kinase family. Oligomer of alpha and beta subunits. Mg(2+) is required as a cofactor. Requires K(+) as cofactor. Mostly expressed in seeds, and, to a lower extent, in roots, leaves (veins and trichomes), inflorescences, siliques, pollen (grains and tubes) and flowers (sepals and petals).

Its subcellular location is the plastid. It localises to the chloroplast stroma. The protein localises to the mitochondrion. It carries out the reaction pyruvate + ATP = phosphoenolpyruvate + ADP + H(+). The protein operates within carbohydrate degradation; glycolysis; pyruvate from D-glyceraldehyde 3-phosphate: step 5/5. Its function is as follows. Required for plastidial pyruvate kinase activity. Involved in seed oil accumulation, embryo development and seed storage compounds mobilization upon germination. This is Plastidial pyruvate kinase 2 (PKP2) from Arabidopsis thaliana (Mouse-ear cress).